Consider the following 501-residue polypeptide: Glycogenin-2 (501 aa).

Positions 42, 44, 45, 48, and 110 each coordinate UDP. UDP-alpha-D-glucose contacts are provided by L42, T44, N45, Y48, R110, K119, D135, A136, D137, N166, S167, D193, D196, and Q197. D135, A136, and D137 together coordinate UDP. D135 serves as a coordination point for Mn(2+). A Mn(2+)-binding site is contributed by D137. The O-linked (Glc...) tyrosine glycan is linked to Y228. Residues H245, G248, and K251 each coordinate UDP. H245 provides a ligand contact to Mn(2+). UDP-alpha-D-glucose is bound by residues G248 and K251. A phosphoserine mark is found at S368, S399, and S459.

Homodimer, tightly complexed to glycogen synthase. Mn(2+) serves as cofactor. In terms of processing, self-glycosylated by the transfer of glucose residues from UDP-glucose to itself, forming an alpha-1,4-glycan of around 10 residues attached to Tyr-228. Detected in liver (at protein level). Expressed preferentially in liver, heart, and pancreas.

The protein resides in the cytoplasm. It is found in the nucleus. It carries out the reaction L-tyrosyl-[glycogenin] + UDP-alpha-D-glucose = alpha-D-glucosyl-L-tyrosyl-[glycogenin] + UDP + H(+). The catalysed reaction is [1,4-alpha-D-glucosyl](n)-L-tyrosyl-[glycogenin] + UDP-alpha-D-glucose = [1,4-alpha-D-glucosyl](n+1)-L-tyrosyl-[glycogenin] + UDP + H(+). Its pathway is glycan biosynthesis; glycogen biosynthesis. In terms of biological role, glycogenin participates in the glycogen biosynthetic process along with glycogen synthase and glycogen branching enzyme. It catalyzes the formation of a short alpha (1,4)-glucosyl chain covalently attached via a glucose 1-O-tyrosyl linkage to internal tyrosine residues and these chains act as primers for the elongation reaction catalyzed by glycogen synthase. The sequence is that of Glycogenin-2 (GYG2) from Homo sapiens (Human).